Here is a 463-residue protein sequence, read N- to C-terminus: MEKPSREAFEGNNKLLIGIVLSVITFWLFAQSLVNVVPILEDSFNTDIGTVNIAVSITALFSGMFVVGAGGLADKYGRIKLTNIGIILNILGSLLIIISNIPLLLIIGRLIQGLSAACIMPATLSIIKSYYIGKDRQRALSYWSIGSWGGSGVCSFFGGAVATLLGWRWIFILSIIISLIALFLIKGTPETKSKSISLNKFDIKGLVLLVIMLLSLNILITKGSELGVSSLLFITLLAIAIGSFSLFIVLEKRATNPLIDFKLFKNKAYTGATASNFLLNGVAGTLIVANTFVQRGLGYSSLQAGSLSITYLVMVLIMIRVGEKLLQTLGCKKPMLIGTGVLIVGECLISLTFLPEILYVICCIIGYLFFGLGLGIYATPSTDTAIANAPLEKVGVAAGIYKMASALGGAFGVALSGAVYAIVSNMTNIYTGAMIALWLNAGMGILSFVIILLLVPKQNDTQL.

The next 14 helical transmembrane spans lie at 17 to 37 (IGIVLSVITFWLFAQSLVNVV), 53 to 73 (IAVSITALFSGMFVVGAGGLA), 86 to 106 (IILNILGSLLIIISNIPLLLI), 107 to 127 (IGRLIQGLSAACIMPATLSII), 142 to 162 (YWSIGSWGGSGVCSFFGGAVA), 165 to 185 (LGWRWIFILSIIISLIALFLI), 201 to 221 (FDIKGLVLLVIMLLSLNILIT), 230 to 250 (SLLFITLLAIAIGSFSLFIVL), 273 to 293 (TASNFLLNGVAGTLIVANTFV), 299 to 319 (YSSLQAGSLSITYLVMVLIMI), 334 to 354 (PMLIGTGVLIVGECLISLTFL), 357 to 377 (ILYVICCIIGYLFFGLGLGIY), 403 to 423 (MASALGGAFGVALSGAVYAIV), and 435 to 455 (IALWLNAGMGILSFVIILLLV).

It belongs to the major facilitator superfamily. TCR/Tet family.

The protein localises to the cell membrane. Functionally, multidrug efflux pump that acts independently of NorA and is one of the factors that confers resistance against diverse quinolones and chemical compounds. Can facilitate bacterial survival in vivo when overexpressed in an abscess and may contribute to the relative resistance of staphylococcal abscesses to antimicrobial therapy. This Staphylococcus aureus (strain MW2) protein is Quinolone resistance protein NorB (norB).